The chain runs to 319 residues: Acetyl-coenzyme A carboxylase carboxyl transferase subunit alpha (319 aa).

The CoA carboxyltransferase C-terminal domain maps to 36–293 (EVERLKTKLE…HDAFLSELDR (258 aa)).

This sequence belongs to the AccA family. In terms of assembly, acetyl-CoA carboxylase is a heterohexamer composed of biotin carboxyl carrier protein (AccB), biotin carboxylase (AccC) and two subunits each of ACCase subunit alpha (AccA) and ACCase subunit beta (AccD).

It is found in the cytoplasm. The enzyme catalyses N(6)-carboxybiotinyl-L-lysyl-[protein] + acetyl-CoA = N(6)-biotinyl-L-lysyl-[protein] + malonyl-CoA. It participates in lipid metabolism; malonyl-CoA biosynthesis; malonyl-CoA from acetyl-CoA: step 1/1. In terms of biological role, component of the acetyl coenzyme A carboxylase (ACC) complex. First, biotin carboxylase catalyzes the carboxylation of biotin on its carrier protein (BCCP) and then the CO(2) group is transferred by the carboxyltransferase to acetyl-CoA to form malonyl-CoA. This chain is Acetyl-coenzyme A carboxylase carboxyl transferase subunit alpha, found in Dichelobacter nodosus (strain VCS1703A).